Here is a 350-residue protein sequence, read N- to C-terminus: Nicotinate-nucleotide--dimethylbenzimidazole phosphoribosyltransferase (350 aa).

Residue Glu317 is the Proton acceptor of the active site.

Belongs to the CobT family.

The catalysed reaction is 5,6-dimethylbenzimidazole + nicotinate beta-D-ribonucleotide = alpha-ribazole 5'-phosphate + nicotinate + H(+). It participates in nucleoside biosynthesis; alpha-ribazole biosynthesis; alpha-ribazole from 5,6-dimethylbenzimidazole: step 1/2. In terms of biological role, catalyzes the synthesis of alpha-ribazole-5'-phosphate from nicotinate mononucleotide (NAMN) and 5,6-dimethylbenzimidazole (DMB). This is Nicotinate-nucleotide--dimethylbenzimidazole phosphoribosyltransferase from Shewanella sp. (strain W3-18-1).